The chain runs to 521 residues: Vang-like protein 2 (521 aa).

The segment at 1-81 (MDTESQYSGY…TTVVTGTSEH (81 aa)) is disordered. Over 1-108 (MDTESQYSGY…VPLDCSRHLG (108 aa)) the chain is Cytoplasmic. The span at 15–33 (GHSRSSRKHRDRRDRHRSK) shows a compositional bias: basic residues. The segment covering 57–67 (ESTRGDERDDN) has biased composition (basic and acidic residues). The span at 69 to 81 (GETTTVVTGTSEH) shows a compositional bias: low complexity. Residues 109–129 (VAAGATLALLSFLTPLAFLLL) form a helical membrane-spanning segment. At 130–147 (PPLLWREELEPCGTACEG) the chain is on the extracellular side. The helical transmembrane segment at 148 to 168 (LFISVAFKLLILLLGSWALFF) threads the bilayer. At 169–178 (RRPKASLPRV) the chain is on the cytoplasmic side. The chain crosses the membrane as a helical span at residues 179 to 199 (FVLRALLMVLVFLLVVSYWLF). The Extracellular segment spans residues 200–217 (YGVRILDARERSYQGVVQ). The helical transmembrane segment at 218-238 (FAVSLVDALLFVHYLAVVLLE) threads the bilayer. Residues 239-521 (LRQLQPQFTL…VMRLQSETSV (283 aa)) lie on the Cytoplasmic side of the membrane.

It belongs to the Vang family. Homodimer and heterodimer with VANGL1. Interacts through its C-terminal region with the N-terminal half of DVL1, DVL2 and DVL3. The PDZ domain of DVL1, DVL2 and DVL3 is required for the interaction. Also interacts with the PDZ domains of MAGI3, SCRIB/SCRB1 and FZD3. Interacts with PRICKLE3.

The protein resides in the cell membrane. Functionally, involved in the control of early morphogenesis and patterning of both axial midline structures and the development of neural plate. Plays a role in the regulation of planar cell polarity, particularly in the orientation of stereociliary bundles in the cochlea. Required for polarization and movement of myocardializing cells in the outflow tract and seems to act via RHOA signaling to regulate this process. Required for cell surface localization of FZD3 and FZD6 in the inner ear. This chain is Vang-like protein 2 (VANGL2), found in Homo sapiens (Human).